Reading from the N-terminus, the 213-residue chain is Outer-membrane lipoprotein carrier protein (213 aa).

A signal peptide spans 1 to 18; sequence MKYFATICIAAYAGLAGA.

It belongs to the LolA family. In terms of assembly, monomer.

Its subcellular location is the periplasm. Participates in the translocation of lipoproteins from the inner membrane to the outer membrane. Only forms a complex with a lipoprotein if the residue after the N-terminal Cys is not an aspartate (The Asp acts as a targeting signal to indicate that the lipoprotein should stay in the inner membrane). The chain is Outer-membrane lipoprotein carrier protein from Albidiferax ferrireducens (strain ATCC BAA-621 / DSM 15236 / T118) (Rhodoferax ferrireducens).